The following is an 842-amino-acid chain: Elongation factor 2 (842 aa).

Residues 17 to 253 (TNVRNMSVIA…LWGDSYFNPK (237 aa)) enclose the tr-type G domain. Residues 26 to 33 (AHVDHGKS), 158 to 161 (NKVD), and 213 to 215 (SGL) each bind GTP. Histidine 699 bears the Diphthamide mark.

This sequence belongs to the TRAFAC class translation factor GTPase superfamily. Classic translation factor GTPase family. EF-G/EF-2 subfamily.

The protein resides in the cytoplasm. The enzyme catalyses GTP + H2O = GDP + phosphate + H(+). Its function is as follows. Catalyzes the GTP-dependent ribosomal translocation step during translation elongation. During this step, the ribosome changes from the pre-translocational (PRE) to the post-translocational (POST) state as the newly formed A-site-bound peptidyl-tRNA and P-site-bound deacylated tRNA move to the P and E sites, respectively. Catalyzes the coordinated movement of the two tRNA molecules, the mRNA and conformational changes in the ribosome. The chain is Elongation factor 2 (EFT1) from Debaryomyces hansenii (strain ATCC 36239 / CBS 767 / BCRC 21394 / JCM 1990 / NBRC 0083 / IGC 2968) (Yeast).